Here is a 585-residue protein sequence, read N- to C-terminus: 2-succinyl-5-enolpyruvyl-6-hydroxy-3-cyclohexene-1-carboxylate synthase (585 aa).

Belongs to the TPP enzyme family. MenD subfamily. Homodimer. Requires Mg(2+) as cofactor. It depends on Mn(2+) as a cofactor. Thiamine diphosphate is required as a cofactor.

The enzyme catalyses isochorismate + 2-oxoglutarate + H(+) = 5-enolpyruvoyl-6-hydroxy-2-succinyl-cyclohex-3-ene-1-carboxylate + CO2. It participates in quinol/quinone metabolism; 1,4-dihydroxy-2-naphthoate biosynthesis; 1,4-dihydroxy-2-naphthoate from chorismate: step 2/7. The protein operates within cofactor biosynthesis; phylloquinone biosynthesis. Catalyzes the thiamine diphosphate-dependent decarboxylation of 2-oxoglutarate and the subsequent addition of the resulting succinic semialdehyde-thiamine pyrophosphate anion to isochorismate to yield 2-succinyl-5-enolpyruvyl-6-hydroxy-3-cyclohexene-1-carboxylate (SEPHCHC). This Crocosphaera subtropica (strain ATCC 51142 / BH68) (Cyanothece sp. (strain ATCC 51142)) protein is 2-succinyl-5-enolpyruvyl-6-hydroxy-3-cyclohexene-1-carboxylate synthase.